A 344-amino-acid polypeptide reads, in one-letter code: Geranylgeranyl pyrophosphate synthase 10, mitochondrial (344 aa).

The N-terminal 40 residues, 1 to 40 (MENREVFVYIVISIFRSLQFLFWRFRPRYNDVTSALTRPL), are a transit peptide targeting the mitochondrion. Lysine 91, arginine 94, and histidine 123 together coordinate isopentenyl diphosphate. Positions 130 and 136 each coordinate Mg(2+). Arginine 141 is a dimethylallyl diphosphate binding site. Residue arginine 142 participates in isopentenyl diphosphate binding. Residues lysine 229, threonine 230, glutamine 267, lysine 284, and lysine 294 each coordinate dimethylallyl diphosphate.

It belongs to the FPP/GGPP synthase family. As to quaternary structure, monomer. Mg(2+) serves as cofactor.

It is found in the mitochondrion. The enzyme catalyses isopentenyl diphosphate + dimethylallyl diphosphate = (2E)-geranyl diphosphate + diphosphate. It carries out the reaction isopentenyl diphosphate + (2E)-geranyl diphosphate = (2E,6E)-farnesyl diphosphate + diphosphate. It catalyses the reaction isopentenyl diphosphate + (2E,6E)-farnesyl diphosphate = (2E,6E,10E)-geranylgeranyl diphosphate + diphosphate. Its pathway is isoprenoid biosynthesis; farnesyl diphosphate biosynthesis; farnesyl diphosphate from geranyl diphosphate and isopentenyl diphosphate: step 1/1. It participates in isoprenoid biosynthesis; geranyl diphosphate biosynthesis; geranyl diphosphate from dimethylallyl diphosphate and isopentenyl diphosphate: step 1/1. The protein operates within isoprenoid biosynthesis; geranylgeranyl diphosphate biosynthesis; geranylgeranyl diphosphate from farnesyl diphosphate and isopentenyl diphosphate: step 1/1. In terms of biological role, catalyzes the trans-addition of the three molecules of IPP onto DMAPP to form geranylgeranyl pyrophosphate. The protein is Geranylgeranyl pyrophosphate synthase 10, mitochondrial of Arabidopsis thaliana (Mouse-ear cress).